We begin with the raw amino-acid sequence, 246 residues long: tRNA pseudouridine synthase A (246 aa).

Residue aspartate 52 is the Nucleophile of the active site. Tyrosine 111 contributes to the substrate binding site.

The protein belongs to the tRNA pseudouridine synthase TruA family. In terms of assembly, homodimer.

The catalysed reaction is uridine(38/39/40) in tRNA = pseudouridine(38/39/40) in tRNA. Its function is as follows. Formation of pseudouridine at positions 38, 39 and 40 in the anticodon stem and loop of transfer RNAs. The protein is tRNA pseudouridine synthase A of Borreliella afzelii (strain PKo) (Borrelia afzelii).